Here is a 194-residue protein sequence, read N- to C-terminus: Lachesicidin (194 aa).

A signal peptide spans 1-22 (MQGFFWKTWLVLAVCGTPASLA). A propeptide spanning residues 23-160 (HRPLSYGEAL…DEEKDQPKRV (138 aa)) is cleaved from the precursor. Disulfide bonds link cysteine 79-cysteine 90 and cysteine 101-cysteine 118. A compositionally biased stretch (acidic residues) spans 125–154 (EEEEEEEEEEQKAEAENDEEVEKEKEDEEK). Residues 125–157 (EEEEEEEEEEQKAEAENDEEVEKEKEDEEKDQP) form a disordered region.

Belongs to the cathelicidin family. As to expression, expressed by the venom gland.

The protein localises to the secreted. The protein resides in the target cell membrane. In terms of biological role, potent antimicrobial peptide against Gram-negative and Gram-positive bacteria. Adopts an amphipathic alpha helical conformation, that may allow to partition into the target membrane. Low hemolytic activities have been observed on mammalian cells. The sequence is that of Lachesicidin from Lachesis muta rhombeata (Bushmaster).